The primary structure comprises 215 residues: Probable phosphoglycerate mutase GpmB (215 aa).

Substrate-binding positions include 8–15, 21–22, R58, R60, 82–85, 104–105, and 151–152; these read RHGETQWN, QG, ELNM, RR, and GI. H9 acts as the Tele-phosphohistidine intermediate in catalysis. Residue E82 is the Proton donor/acceptor of the active site.

This sequence belongs to the phosphoglycerate mutase family. GpmB subfamily.

The catalysed reaction is (2R)-2-phosphoglycerate = (2R)-3-phosphoglycerate. It participates in carbohydrate degradation; glycolysis; pyruvate from D-glyceraldehyde 3-phosphate: step 3/5. In Escherichia coli O9:H4 (strain HS), this protein is Probable phosphoglycerate mutase GpmB.